Reading from the N-terminus, the 454-residue chain is Kynurenine 3-monooxygenase (454 aa).

It belongs to the aromatic-ring hydroxylase family. KMO subfamily. The cofactor is FAD.

The catalysed reaction is L-kynurenine + NADPH + O2 + H(+) = 3-hydroxy-L-kynurenine + NADP(+) + H2O. It functions in the pathway cofactor biosynthesis; NAD(+) biosynthesis; quinolinate from L-kynurenine: step 1/3. Catalyzes the hydroxylation of L-kynurenine (L-Kyn) to form 3-hydroxy-L-kynurenine (L-3OHKyn). Required for synthesis of quinolinic acid. The sequence is that of Kynurenine 3-monooxygenase from Salinispora arenicola (strain CNS-205).